The primary structure comprises 532 residues: 2,3-bisphosphoglycerate-independent phosphoglycerate mutase (532 aa).

Mn(2+) is bound by residues Asp-15 and Ser-65. The Phosphoserine intermediate role is filled by Ser-65. Substrate-binding positions include His-126, 156-157 (RD), Arg-188, Arg-194, 258-261 (RPDR), and Lys-331. Residues Asp-398, His-402, Asp-439, His-440, and His-457 each coordinate Mn(2+).

This sequence belongs to the BPG-independent phosphoglycerate mutase family. As to quaternary structure, monomer. The cofactor is Mn(2+).

It catalyses the reaction (2R)-2-phosphoglycerate = (2R)-3-phosphoglycerate. It functions in the pathway carbohydrate degradation; glycolysis; pyruvate from D-glyceraldehyde 3-phosphate: step 3/5. In terms of biological role, catalyzes the interconversion of 2-phosphoglycerate and 3-phosphoglycerate. The sequence is that of 2,3-bisphosphoglycerate-independent phosphoglycerate mutase from Nostoc punctiforme (strain ATCC 29133 / PCC 73102).